We begin with the raw amino-acid sequence, 78 residues long: Small ribosomal subunit protein bS18 (78 aa).

The protein belongs to the bacterial ribosomal protein bS18 family. As to quaternary structure, part of the 30S ribosomal subunit. Forms a tight heterodimer with protein bS6.

Its function is as follows. Binds as a heterodimer with protein bS6 to the central domain of the 16S rRNA, where it helps stabilize the platform of the 30S subunit. This is Small ribosomal subunit protein bS18 from Lactobacillus acidophilus (strain ATCC 700396 / NCK56 / N2 / NCFM).